The chain runs to 406 residues: telomere-associated protein 1 (406 aa).

Over residues 20-40 (EHHNGSHDNDDKDKEDKEKQN) the composition is skewed to basic and acidic residues. The tract at residues 20 to 46 (EHHNGSHDNDDKDKEDKEKQNTEAVAA) is disordered. Residues 147 to 206 (TTRRVRLRWTQEETADLMEGCKVHGVGNWKKILTDPRFRFNNRTAVDLKDRFRTCFPEDY) enclose the HTH myb-type domain. Positions 175 to 202 (WKKILTDPRFRFNNRTAVDLKDRFRTCF) form a DNA-binding region, H-T-H motif. Positions 234–288 (VNRKERRVFTPEEDERLLNGFMKHGPSWSNIQRDNELGLFERRSTDLRDRFRNAF) constitute a Myb-like domain. The tract at residues 368–389 (TQELQPQAHSRKQQGGDGLKEE) is disordered.

The protein resides in the nucleus. It is found in the chromosome. Its subcellular location is the telomere. Functionally, telomere-binding protein that mediates telomere clustering by promoting formation of head-to-head dimers of DNA molecules through the telomeric tracts. Binds specifically 5'-TTAGTCAGGG-3' repeats in subtelomeric regions. This chain is telomere-associated protein 1, found in Yarrowia lipolytica (strain CLIB 122 / E 150) (Yeast).